Reading from the N-terminus, the 238-residue chain is 1-(5-phosphoribosyl)-5-[(5-phosphoribosylamino)methylideneamino] imidazole-4-carboxamide isomerase (238 aa).

The active-site Proton acceptor is D8. The active-site Proton donor is D130.

Belongs to the HisA/HisF family.

The protein localises to the cytoplasm. The enzyme catalyses 1-(5-phospho-beta-D-ribosyl)-5-[(5-phospho-beta-D-ribosylamino)methylideneamino]imidazole-4-carboxamide = 5-[(5-phospho-1-deoxy-D-ribulos-1-ylimino)methylamino]-1-(5-phospho-beta-D-ribosyl)imidazole-4-carboxamide. Its pathway is amino-acid biosynthesis; L-histidine biosynthesis; L-histidine from 5-phospho-alpha-D-ribose 1-diphosphate: step 4/9. The chain is 1-(5-phosphoribosyl)-5-[(5-phosphoribosylamino)methylideneamino] imidazole-4-carboxamide isomerase from Methanococcus vannielii (strain ATCC 35089 / DSM 1224 / JCM 13029 / OCM 148 / SB).